The sequence spans 1016 residues: Formate dehydrogenase-O major subunit (1016 aa).

A signal peptide (tat-type signal) is located at residues 1–33 (MQVSRRQFFKICAGGMAGTTAAALGFAPSVALA). Residues 43-106 (TRETRNTCTY…GLVDFIHSES (64 aa)) form the 4Fe-4S Mo/W bis-MGD-type domain. [4Fe-4S] cluster contacts are provided by C50, C53, C57, and C92. Position 196 (U196) is a non-standard amino acid, selenocysteine.

This sequence belongs to the prokaryotic molybdopterin-containing oxidoreductase family. In terms of assembly, formate dehydrogenase is a membrane-bound complex, formed by subunits alpha, beta and gamma. Mo-bis(molybdopterin guanine dinucleotide) serves as cofactor. [4Fe-4S] cluster is required as a cofactor. Exported by the Tat system. The position of the signal peptide cleavage has not been experimentally proven.

The protein resides in the periplasm. It carries out the reaction formate + NAD(+) = CO2 + NADH. Allows to use formate as major electron donor during aerobic respiration. Subunit alpha possibly forms the active site. This is Formate dehydrogenase-O major subunit (fdoG) from Escherichia coli (strain K12).